Here is a 605-residue protein sequence, read N- to C-terminus: Elongation factor 4 (605 aa).

Residues 11–193 (KCIRNFSIIA…QIVTRISPPQ (183 aa)) enclose the tr-type G domain. Residues 23 to 28 (DHGKST) and 140 to 143 (NKVD) each bind GTP.

It belongs to the TRAFAC class translation factor GTPase superfamily. Classic translation factor GTPase family. LepA subfamily.

It localises to the cell membrane. The catalysed reaction is GTP + H2O = GDP + phosphate + H(+). Required for accurate and efficient protein synthesis under certain stress conditions. May act as a fidelity factor of the translation reaction, by catalyzing a one-codon backward translocation of tRNAs on improperly translocated ribosomes. Back-translocation proceeds from a post-translocation (POST) complex to a pre-translocation (PRE) complex, thus giving elongation factor G a second chance to translocate the tRNAs correctly. Binds to ribosomes in a GTP-dependent manner. The chain is Elongation factor 4 from Aster yellows witches'-broom phytoplasma (strain AYWB).